The primary structure comprises 142 residues: Baculoviral IAP repeat-containing protein 5 (142 aa).

Residues 18–88 (RVSTFKNWPF…KHSSGCAFLS (71 aa)) form a BIR repeat. The residue at position 20 (Ser20) is a Phosphoserine; by AURKC. At Lys23 the chain carries N6-acetyllysine. Phosphothreonine; by CDK1 and CDK15 is present on Thr34. A Phosphothreonine modification is found at Thr48. The Zn(2+) site is built by Cys57, Cys60, His77, and Cys84. N6-acetyllysine occurs at positions 90, 110, 112, and 115. A Phosphothreonine; by AURKB modification is found at Thr117. Position 129 is an N6-acetyllysine (Lys129).

This sequence belongs to the IAP family. As to quaternary structure, monomer or homodimer. Exists as a homodimer in the apo state and as a monomer in the CPC-bound state. The monomer protects cells against apoptosis more efficiently than the dimer. Only the dimeric form is capable of enhancing tubulin stability in cells. When phosphorylated, interacts with LAMTOR5/HBXIP; the resulting complex binds pro-CASP9, as well as active CASP9, but much less efficiently. Component of the chromosomal passenger complex (CPC) composed of at least BIRC5/survivin, CDCA8/borealin, INCENP, AURKB or AURKC; in the complex forms a triple-helix bundle-based subcomplex with INCENP and CDCA8. Interacts with JTB. Interacts (via BIR domain) with histone H3 phosphorylated at 'Thr-3' (H3pT3). Interacts with EVI5. Interacts with GTP-bound RAN in both the S and M phases of the cell cycle. Interacts with USP9X. Interacts with tubulin. Interacts with BIRC2/c-IAP1. The acetylated form at Lys-129 interacts with STAT3. The monomeric form deacetylated at Lys-129 interacts with XPO1/CRM1. The monomeric form interacts with XIAP/BIRC4. Both the dimeric and monomeric form can interact with DIABLO/SMAC. Interacts with BIRC6/bruce. Interacts with FBXL7; this interaction facilitates the polyubiquitination and subsequent proteasomal degradation of BIRC5 by the SCF(FBXL7) E3 ubiquitin-protein ligase complex. Post-translationally, ubiquitinated by the Cul9-RING ubiquitin-protein ligase complex, leading to its degradation. Ubiquitination is required for centrosomal targeting. Deubiquitinated by USP35 or USP38; leading to stabilization. Acetylation at Lys-129 results in its homodimerization, while deacetylation promotes the formation of monomers which heterodimerize with XPO1/CRM1 which facilitates its nuclear export. The acetylated form represses STAT3 transactivation. The dynamic equilibrium between its acetylation and deacetylation at Lys-129 determines its interaction with XPO1/CRM1, its subsequent subcellular localization, and its ability to inhibit STAT3 transactivation. In terms of processing, in vitro phosphorylation at Thr-117 by AURKB prevents interaction with INCENP and localization to mitotic chromosomes. Phosphorylation at Thr-48 by CK2 is critical for its mitotic and anti-apoptotic activities. Phosphorylation at Thr-34 by CDK15 is critical for its anti-apoptotic activity. Phosphorylation at Ser-20 by AURKC is critical for regulation of proper chromosome alignment and segregation, and possibly cytokinesis.

The protein resides in the cytoplasm. Its subcellular location is the nucleus. It is found in the chromosome. The protein localises to the centromere. It localises to the cytoskeleton. The protein resides in the spindle. Its subcellular location is the kinetochore. It is found in the midbody. Multitasking protein that has dual roles in promoting cell proliferation and preventing apoptosis. Component of a chromosome passage protein complex (CPC) which is essential for chromosome alignment and segregation during mitosis and cytokinesis. Acts as an important regulator of the localization of this complex; directs CPC movement to different locations from the inner centromere during prometaphase to midbody during cytokinesis and participates in the organization of the center spindle by associating with polymerized microtubules. Involved in the recruitment of CPC to centromeres during early mitosis via association with histone H3 phosphorylated at 'Thr-3' (H3pT3) during mitosis. The complex with RAN plays a role in mitotic spindle formation by serving as a physical scaffold to help deliver the RAN effector molecule TPX2 to microtubules. May counteract a default induction of apoptosis in G2/M phase. The acetylated form represses STAT3 transactivation of target gene promoters. May play a role in neoplasia. Inhibitor of CASP3 and CASP7. Essential for the maintenance of mitochondrial integrity and function. This is Baculoviral IAP repeat-containing protein 5 (BIRC5) from Canis lupus familiaris (Dog).